The chain runs to 115 residues: NADH-ubiquinone oxidoreductase chain 3 (115 aa).

3 helical membrane-spanning segments follow: residues 5–25, 55–75, and 86–106; these read LTLM…FWLP, FFLV…LLPL, and LMLT…AYEW.

The protein belongs to the complex I subunit 3 family. Core subunit of respiratory chain NADH dehydrogenase (Complex I) which is composed of 45 different subunits. Interacts with TMEM186. Interacts with TMEM242.

Its subcellular location is the mitochondrion inner membrane. It carries out the reaction a ubiquinone + NADH + 5 H(+)(in) = a ubiquinol + NAD(+) + 4 H(+)(out). Its function is as follows. Core subunit of the mitochondrial membrane respiratory chain NADH dehydrogenase (Complex I) which catalyzes electron transfer from NADH through the respiratory chain, using ubiquinone as an electron acceptor. Essential for the catalytic activity of complex I. The chain is NADH-ubiquinone oxidoreductase chain 3 from Avahi cleesei (Cleese's woolly lemur).